Here is a 185-residue protein sequence, read N- to C-terminus: Ribosome-recycling factor (185 aa).

It belongs to the RRF family.

It localises to the cytoplasm. In terms of biological role, responsible for the release of ribosomes from messenger RNA at the termination of protein biosynthesis. May increase the efficiency of translation by recycling ribosomes from one round of translation to another. This chain is Ribosome-recycling factor, found in Pelobacter propionicus (strain DSM 2379 / NBRC 103807 / OttBd1).